A 1368-amino-acid chain; its full sequence is MAYSFTEKKRIRKSFAKRATVHQVPFLLATQIESYTQFLQAETPTARRKTEGLQAAFNAIFPISSHNGLARMEFVSYHLSNPPFDVKECQQRGLTFHSALRAKVRLIINDRENPGKVKEVKEQEVYMGEIPLMTSTGSFVINGTERVIVSQLHRSPGVFFEHDKGKTHSSGKLLFSARIIPYRGSWLDFEFDPKDILYFRVDRRRKMPVTILLKSIGLTPEQILAHFFVFDNFTLQAEGAQLEFVPERLRGEVARFDIADKNGRVVVEKDKRINAKHIRDLDSAGTKLISVPEDYLLGRVLAKNIIDPDTGEVIANANDELTETLLENLREAGVKQIQTLYTNDLDQGPYMSQTLRVDETADQTAARIAIYRMMRPGEPPTEEAVEALFQRLFYSEESYDLSRVGRMKVNSRLGRPSGEGAMVLQDEDILETIKILVNLRNGKGEVDDIDHLGNRRVRCVGELAENQFRAGLSRVERAVKERLGQAETENLMPHDLINSKPISSAIREFFGSSQLSQFMDQTNPLSEITHKRRVSALGPGGLTRERAGFEVRDVHPTHYGRVCPIETPEGPNIGLINSLALYARLNEYGFLETPYRKVVDSKLTDQVDYLSAIEEGKYVVAQANATVDADGNLTDELVSAREGSERETRMVTPDRVQYIDVAPSQIVSAAASLVPFLEHDDANRALMGANMQRQAVPCLRPDKPLVGTGIERTVAVDSGTAVQAMRGGVVDYVDAMRIVIRVNDDEAVAGEVGVDIYNLIKYTRSNQNTNINQRPMVKVGDHVARGDVIADGASTDLGELALGQNMLVAFMPWNGYNFEDSILISERVVAEDRYTSIHIEELSVVARDTKLGPEEITRDISNLAEAQLARLDESGITYIGAEVEAGDVLVGKVTPKGETQLTPEEKLLRAIFGEKASDVKDTSLRVPSGMSGIVIDVQVFTREGVTRDKRAQSIIDDELKRYRLDLNDQLRIVEGDAFQRLERLLIDKTVNGGPKKLAKGAKITKEYLADIDRYHWFDIRPADEELAAQLEAVKEAIEQKRHEFDLAFEEKRKKLTQGDELPPGVIKMVKVYLAVKRRLQPGDKMAGRHGNKGVVSKITPIEDMPYMADGTPADIVLNPLGVPSRMNVGQILETHLGWAARGLGERIGNMLKAQAKAAEVRKLLTQIYNESGKVEDLDSLSDSEVLELAENLKKGVPFATPVFDGAHEDEIRRMLDLAYPEEIAKEKGLTASKQQVTLFDGRTGEAFERPVTLGVMHMLKLHHLVDDKMHARSTGPYSLVTQQPLGGKAQFGGQRFGEMEVWALEAYGASYVLQEMLTVKSDDVNGRTKVYENIVKGEHSIDAGMPESFNVLVKEIRSLGIDIDLDRY.

It belongs to the RNA polymerase beta chain family. The RNAP catalytic core consists of 2 alpha, 1 beta, 1 beta' and 1 omega subunit. When a sigma factor is associated with the core the holoenzyme is formed, which can initiate transcription.

It carries out the reaction RNA(n) + a ribonucleoside 5'-triphosphate = RNA(n+1) + diphosphate. In terms of biological role, DNA-dependent RNA polymerase catalyzes the transcription of DNA into RNA using the four ribonucleoside triphosphates as substrates. This Cupriavidus necator (strain ATCC 17699 / DSM 428 / KCTC 22496 / NCIMB 10442 / H16 / Stanier 337) (Ralstonia eutropha) protein is DNA-directed RNA polymerase subunit beta.